We begin with the raw amino-acid sequence, 3131 residues long: Enniatin synthase (3131 aa).

The condensation 1 stretch occupies residues 53–466 (ADDKQRAVGH…VEKVDMMTQE (414 aa)). The disordered stretch occupies residues 186–212 (NDEHPRQFETPDSSQATPEEDLQPNPS). Residues 495–887 (SQSPNKAAVA…GRMDSQVKIR (393 aa)) form an adenylation 1 region. One can recognise a Carrier 1 domain in the interval 1010–1086 (SSGTDTYTKL…GLKAIVIGTS (77 aa)). Serine 1047 carries the O-(pantetheine 4'-phosphoryl)serine modification. The interval 1105 to 1534 (SYAQNRMWFL…ETCISVLPLT (430 aa)) is condensation 2. The segment at 1563–1960 (FREQAAANPE…GRMDNQFKIR (398 aa)) is adenylation 2. Positions 2021 to 2177 (EGWQDHFESG…YLAEVIDGLI (157 aa)) are S-adenosyl-L-methionine-dependent N-methyltransferase. 2 consecutive Carrier domains span residues 2504–2578 (FPIS…RQGL) and 2598–2671 (APRT…ESSH). 2 positions are modified to O-(pantetheine 4'-phosphoryl)serine: serine 2538 and serine 2632. The segment at 2718-3123 (QDVYPSTQMQ…RHVLEEVCKT (406 aa)) is condensation 3.

The protein belongs to the ATP-dependent AMP-binding enzyme family. The cofactor is pantetheine 4'-phosphate. The N-terminus is blocked.

Its pathway is antibiotic biosynthesis; enniatin biosynthesis. With respect to regulation, the N-methylation activity is inhibited by S-adenosyl-L-homocysteine and sinefugin. Functionally, nonribosomal peptide synthetase that synthesizes enniatin by coupling three D-hydroxycarboxylic acids and three L-amino acids via amide and ester bonds in an alternating fashion. Whereas ESYN1 can accept different amino acids as precursors (L -valine, L-isoleucine or L-leucine), only one species of D-hydroxycarboxylic acid can be found in natural enniatin isolates (D-hydroxyisovaleric acid, D-Hiv). D-Hiv stems from L-valine deanimation by a valine aminotransferase to 2-keto-isovaleric acid (2-Kiv), which becomes subsequently reduced by a keto-isovaleric acid reductase (KivR) to D-Hiv. Peptide bond formation and N-methylation of the amino acid occur before three enzyme-bound dipeptidols are condensed to a hexapeptidol. The polypeptide is Enniatin synthase (Fusarium equiseti (Fusarium scirpi)).